The sequence spans 649 residues: ATP-dependent DNA helicase Q1 (649 aa).

A Helicase ATP-binding domain is found at 100–275 (INVTMAGKEV…QKILCIEKCF (176 aa)). Residue 113–120 (MPTGGGKG) participates in ATP binding. The DEVH box signature appears at 219–222 (DEVH). In terms of domain architecture, Helicase C-terminal spans 300–451 (FIEDIVKLIN…EMVSYCQNIS (152 aa)). Zn(2+) is bound by residues C453, C471, C475, and C478. 2 positions are modified to N6-acetyllysine: K514 and K522. Phosphoserine occurs at positions 597 and 602. Residues 597-608 (SFRVESSQTCHS) show a composition bias toward polar residues. The interval 597–649 (SFRVESSQTCHSEQGDKKMEEKNSGNFQKKAANMLQQSGSKNTGAKKRKIDDA) is disordered. A compositionally biased stretch (basic and acidic residues) spans 609-619 (EQGDKKMEEKN). Positions 630–639 (MLQQSGSKNT) are enriched in polar residues. S634 is modified (phosphoserine). Residues 640–649 (GAKKRKIDDA) are compositionally biased toward basic residues.

Belongs to the helicase family. RecQ subfamily. In terms of assembly, may form homodimers or higher order oligomers. Interacts with EXO1. Interacts with MLH1. Interacts with PARP1. Mg(2+) serves as cofactor. Mn(2+) is required as a cofactor. The cofactor is Zn(2+).

The protein resides in the nucleus. The catalysed reaction is Couples ATP hydrolysis with the unwinding of duplex DNA by translocating in the 3'-5' direction.. It catalyses the reaction ATP + H2O = ADP + phosphate + H(+). The enzyme catalyses dATP + H2O = dADP + phosphate + H(+). Functionally, DNA helicase that plays a role in DNA damage repair and genome stability. Exhibits a magnesium- and ATP-dependent DNA-helicase activity that unwinds single- and double-stranded DNA in a 3'-5' direction. Plays a role in restoring regressed replication forks. Required to restart stalled replication forks induced by abortive topoisomerase 1 and 2 lesions. May play a role in the repair of DNA that is damaged by ultraviolet light or other mutagens. This is ATP-dependent DNA helicase Q1 (RECQL) from Pongo abelii (Sumatran orangutan).